The chain runs to 270 residues: GTP cyclohydrolase FolE2 (270 aa).

Belongs to the GTP cyclohydrolase IV family.

The enzyme catalyses GTP + H2O = 7,8-dihydroneopterin 3'-triphosphate + formate + H(+). The protein operates within cofactor biosynthesis; 7,8-dihydroneopterin triphosphate biosynthesis; 7,8-dihydroneopterin triphosphate from GTP: step 1/1. Converts GTP to 7,8-dihydroneopterin triphosphate. The sequence is that of GTP cyclohydrolase FolE2 from Cupriavidus pinatubonensis (strain JMP 134 / LMG 1197) (Cupriavidus necator (strain JMP 134)).